The following is a 349-amino-acid chain: MRIEEDIKLGFKDVLIRPKRSTLKSRSEVNLIRCFSFKYSTMKWFGIPLIAANMDTIGTFRMAEALSKFNILTAVHKYYSFDEWKNFISVSSKEILEHVIVSIGTSNLDFFKIKKIFSLSSELKYICIDVANGYSEHFVSFLKKIRSFFPDKIICAGNVVTGEMVEELILSGADIVKVGIGPGSVCTTRLKTGIGYPQLSAIIECADAAHGLNGQIISDGGCTVSGDIAKAFGGGADFVMLGGMFAGHTECLGEIIQEKSKKFMLFYGMSSTSAMKRYTGKIPGYRASEGKIVKIPFRGNVDVTVRDILGGLRSSCTYVGAQKLKELTKRTTFIRVSEQENCIFNNFKN.

108 to 131 is an NADP(+) binding site; that stretch reads LDFFKIKKIFSLSSELKYICIDVA. The K(+) site is built by G181 and G183. C186 serves as the catalytic Thioimidate intermediate. 216–239 is an NADP(+) binding site; that stretch reads IISDGGCTVSGDIAKAFGGGADFV.

The protein belongs to the IMPDH/GMPR family. GuaC type 1 subfamily. As to quaternary structure, homotetramer.

The enzyme catalyses IMP + NH4(+) + NADP(+) = GMP + NADPH + 2 H(+). Its function is as follows. Catalyzes the irreversible NADPH-dependent deamination of GMP to IMP. It functions in the conversion of nucleobase, nucleoside and nucleotide derivatives of G to A nucleotides, and in maintaining the intracellular balance of A and G nucleotides. In Buchnera aphidicola subsp. Schizaphis graminum (strain Sg), this protein is GMP reductase.